Consider the following 1402-residue polypeptide: DNA-directed RNA polymerase subunit beta' (1402 aa).

Residues cysteine 71, cysteine 73, cysteine 86, and cysteine 89 each coordinate Zn(2+). Residues aspartate 462, aspartate 464, and aspartate 466 each contribute to the Mg(2+) site. Zn(2+) is bound by residues cysteine 811, cysteine 885, cysteine 892, and cysteine 895.

Belongs to the RNA polymerase beta' chain family. As to quaternary structure, the RNAP catalytic core consists of 2 alpha, 1 beta, 1 beta' and 1 omega subunit. When a sigma factor is associated with the core the holoenzyme is formed, which can initiate transcription. Mg(2+) is required as a cofactor. Requires Zn(2+) as cofactor.

The enzyme catalyses RNA(n) + a ribonucleoside 5'-triphosphate = RNA(n+1) + diphosphate. In terms of biological role, DNA-dependent RNA polymerase catalyzes the transcription of DNA into RNA using the four ribonucleoside triphosphates as substrates. This chain is DNA-directed RNA polymerase subunit beta', found in Bartonella henselae (strain ATCC 49882 / DSM 28221 / CCUG 30454 / Houston 1) (Rochalimaea henselae).